We begin with the raw amino-acid sequence, 854 residues long: Probable disease resistance protein At1g51480 (854 aa).

Residues 25 to 62 (RNYIHKMEANLDDLHTTMEELKNGRDDLLRRVSIEEDK) adopt a coiled-coil conformation. The NB-ARC domain maps to 138–441 (AHKIPVPKVE…CEGYINPNRY (304 aa)). Residue 180–187 (GMGGVGKT) participates in ATP binding. 6 LRR repeats span residues 514–535 (IVRQ…SKCS), 536–557 (NLST…FFLF), 560–582 (KLVV…ISNL), 584–605 (SLQY…MKKL), 607–629 (KLIY…SATL), and 631–652 (NLQV…MEEL).

The protein belongs to the disease resistance NB-LRR family.

In terms of biological role, probable disease resistance protein. The sequence is that of Probable disease resistance protein At1g51480 from Arabidopsis thaliana (Mouse-ear cress).